The following is a 169-amino-acid chain: Phosphopantetheine adenylyltransferase (169 aa).

Position 13 (Thr-13) interacts with substrate. Residues 13 to 14 (TF) and His-21 contribute to the ATP site. Residues Lys-45, Leu-82, and Arg-96 each contribute to the substrate site. ATP contacts are provided by residues 97 to 99 (GLR), Glu-107, and 132 to 138 (HQFISSR).

This sequence belongs to the bacterial CoaD family. As to quaternary structure, homohexamer. It depends on Mg(2+) as a cofactor.

The protein resides in the cytoplasm. It carries out the reaction (R)-4'-phosphopantetheine + ATP + H(+) = 3'-dephospho-CoA + diphosphate. Its pathway is cofactor biosynthesis; coenzyme A biosynthesis; CoA from (R)-pantothenate: step 4/5. Reversibly transfers an adenylyl group from ATP to 4'-phosphopantetheine, yielding dephospho-CoA (dPCoA) and pyrophosphate. The sequence is that of Phosphopantetheine adenylyltransferase from Acidiphilium cryptum (strain JF-5).